The primary structure comprises 616 residues: Alpha terpineol synthase, chloroplastic (616 aa).

A chloroplast-targeting transit peptide spans 1–41; it reads MALLSVAPLQKPLTSCSPFSTTMPTLGVCTPRKVVTPSIIM. Aspartate 367, aspartate 371, and aspartate 519 together coordinate Mg(2+). The DDXXD motif motif lies at 367–371; it reads DDIYD.

It belongs to the terpene synthase family. Tpsd subfamily. The cofactor is Mg(2+). It depends on Mn(2+) as a cofactor.

The protein resides in the plastid. Its subcellular location is the chloroplast. It carries out the reaction (2E)-geranyl diphosphate + H2O = (S)-alpha-terpineol + diphosphate. The enzyme catalyses (2E)-geranyl diphosphate + H2O = 1,8-cineole + diphosphate. The catalysed reaction is (2E)-geranyl diphosphate = beta-myrcene + diphosphate. It catalyses the reaction (2E)-geranyl diphosphate = (1S,5S)-sabinene + diphosphate. Its pathway is terpene metabolism; oleoresin biosynthesis. It functions in the pathway secondary metabolite biosynthesis; terpenoid biosynthesis. Its function is as follows. Monoterpene synthase (TPS) involved in the biosynthesis of monoterpene natural products included in conifer oleoresin secretions and volatile emissions; these compounds contribute to biotic and abiotic stress defense against herbivores and pathogens. Catalyzes the conversion of (2E)-geranyl diphosphate (GPP) to alpha-terpineol and, to a lower extent, to 1,8-cineole, myrcene and (-)-sabinene. The polypeptide is Alpha terpineol synthase, chloroplastic (Pinus contorta (Shore pine)).